A 416-amino-acid chain; its full sequence is Gamma-glutamyl phosphate reductase (416 aa).

This sequence belongs to the gamma-glutamyl phosphate reductase family.

The protein resides in the cytoplasm. The catalysed reaction is L-glutamate 5-semialdehyde + phosphate + NADP(+) = L-glutamyl 5-phosphate + NADPH + H(+). The protein operates within amino-acid biosynthesis; L-proline biosynthesis; L-glutamate 5-semialdehyde from L-glutamate: step 2/2. In terms of biological role, catalyzes the NADPH-dependent reduction of L-glutamate 5-phosphate into L-glutamate 5-semialdehyde and phosphate. The product spontaneously undergoes cyclization to form 1-pyrroline-5-carboxylate. This Actinobacillus succinogenes (strain ATCC 55618 / DSM 22257 / CCUG 43843 / 130Z) protein is Gamma-glutamyl phosphate reductase.